We begin with the raw amino-acid sequence, 417 residues long: MSNLKITNVKTILTAPGGIDLAVVKIETNEPGLYGLGCATFTQRIFAVKSAIDEYMAPFLVGKDPTRIEDIWQSGVVSGYWRNGPIMNNALSGVDMALWDIKGKLAGMPVYDLLGGKCRDGIPLYCHTDGGDEVEVEDNIRARMEEGYQYVRCQMGMYGGAGTDDLKLIATQLARAKNIQPKRSPRSKTPGIYFDPDAYAKSVPRLFDHLRNKLGFGIEFIHDVHERVTPVTAINLAKTLEQYQLFYLEDPVAPENIDWLKMLRQQSSTPISMGELFVNVNEWKPLIDNRLIDYIRCHVSTIGGITPAKKLAVYSELNGVRTAWHGPGDISPVGVCANMHLDLSSPNFGIQEYTPMNDALRDVFPGCPEIDHGYAYLNDKPGLGIDIDEAKAAKYPCEGGIPSWTMARTPDGTASRP.

The substrate site is built by Q43 and H127. Residue Y158 is the Proton donor/acceptor of the active site. D223 provides a ligand contact to Mg(2+). Catalysis depends on H225, which acts as the Proton donor/acceptor. E249 and E275 together coordinate Mg(2+). Residues E275, R296, H325, D329, and E352 each contribute to the substrate site.

The protein belongs to the mandelate racemase/muconate lactonizing enzyme family. GalD subfamily. Mg(2+) serves as cofactor.

It carries out the reaction D-gluconate = 2-dehydro-3-deoxy-D-gluconate + H2O. Its function is as follows. Has low D-gluconate dehydratase activity (in vitro), suggesting that it has no significant role in D-gluconate degradation in vivo. Has no detectable activity with a panel of 70 other acid sugars (in vitro). In Salmonella virchow (strain SL491), this protein is D-galactonate dehydratase family member SeV_A0456.